Reading from the N-terminus, the 444-residue chain is Jacalin-related lectin 11 (444 aa).

A2 carries the N-acetylalanine modification. Jacalin-type lectin domains are found at residues A2–K143, S146–P290, and P298–A442.

This sequence belongs to the jacalin lectin family.

This Arabidopsis thaliana (Mouse-ear cress) protein is Jacalin-related lectin 11 (JAL11).